We begin with the raw amino-acid sequence, 478 residues long: Probable L-ascorbate peroxidase 8, chloroplastic (478 aa).

A compositionally biased stretch (low complexity) spans 1 to 13; it reads MAERIAASLLPAA. Disordered stretches follow at residues 1–31 and 44–66; these read MAERIAASLLPAASPSPAPSPPPPRPRVSAA and GGLRLRSRPSRFPQKAATTRSGR. A chloroplast-targeting transit peptide spans 1 to 76; it reads MAERIAASLL…AGAGARAVVR (76 aa). A compositionally biased stretch (pro residues) spans 14-26; the sequence is SPSPAPSPPPPRP. The active-site Proton acceptor is His-117. The interval 245-276 is disordered; the sequence is AHTLGRSRPDRSGWGKPETKYTKDGPGEPGGQ. His-246 contributes to the heme b binding site. Thr-247 contributes to the K(+) binding site. Positions 251-270 are enriched in basic and acidic residues; the sequence is SRPDRSGWGKPETKYTKDGP. Residues Thr-279 and Asp-286 each contribute to the K(+) site. Residues 346 to 417 form a disordered region; it reads AKFDPPEGFS…DNNGAAPQPE (72 aa). Over residues 369 to 381 the composition is skewed to pro residues; it reads PAPAPAAAPPPPP. Low complexity predominate over residues 394–406; the sequence is PVTVGAAVASSPA. A helical membrane pass occupies residues 458–478; it reads YFLNIMLLIGGLAFLTSLLGS.

The protein belongs to the peroxidase family. Ascorbate peroxidase subfamily. Interacts with SWEET11/OS8N3. Heme b is required as a cofactor. As to expression, expressed in roots, leaves, stems and flowers. Expressed in leaves, shoots and panicles. Expressed at low levels in roots.

The protein localises to the plastid. The protein resides in the chloroplast thylakoid membrane. It catalyses the reaction L-ascorbate + H2O2 = L-dehydroascorbate + 2 H2O. In terms of biological role, involved in defense response and tolerance to the bacterial pathogen Xanthomonas oryzae pv. oryzae (Xoo). Plays an important role in hydrogen peroxide removal during infection by Xoo. Involved in response to abiotic stress. Plays a role in hydrogen peroxide removal durings salt stress. The sequence is that of Probable L-ascorbate peroxidase 8, chloroplastic from Oryza sativa subsp. japonica (Rice).